The sequence spans 393 residues: Isocitrate dehydrogenase [NAD] subunit gamma 1, mitochondrial (393 aa).

The transit peptide at 1–39 (MALKVAIAAGSAAKAIFKPALLCRPWEVLAAHEAPRRSI) directs the protein to the mitochondrion. Thr-120 provides a ligand contact to citrate. At Ser-130 the chain carries Phosphoserine. Asn-133 serves as a coordination point for citrate. Arg-136 and Arg-167 together coordinate substrate. Lys-206 is subject to N6-acetyllysine. Lys-226 carries the N6-succinyllysine modification. Asp-254 serves as a coordination point for substrate. Asp-254 contributes to the Mn(2+) binding site. Residues Asn-312, Thr-313, and Asn-324 each contribute to the ADP site.

The protein belongs to the isocitrate and isopropylmalate dehydrogenases family. As to quaternary structure, heterooligomer of subunits alpha (IDH3A), beta (IDH3B), and gamma (IDH3G) in the apparent ratio of 2:1:1. The heterodimer containing one IDH3A and one IDH3B subunit and the heterodimer containing one IDH3A and one IDH3G subunit assemble into a heterotetramer (which contains two subunits of IDH3A, one of IDH3B and one of IDH3G) and further into the heterooctamer. Requires Mg(2+) as cofactor. Mn(2+) serves as cofactor.

The protein resides in the mitochondrion. Its activity is regulated as follows. The heterotetramer and the heterodimer composed of IDH3A and IDH3G subunits can be allosterically activated by citrate (CIT) or/and ADP, and the two activators can act independently or synergistically. The heterodimer composed of IDH3A and IDH3B subunits cannot be allosterically regulated and the allosteric regulation of the heterotetramer is through the IDH3G subunit and not the IDH3B subunit. The IDH3G subunit contains the allosteric site which consists of a CIT-binding site and an ADP-binding site, and the binding of CIT and ADP causes conformational changes at the allosteric site which are transmitted to the active site in the catalytic subunit (IDH3A) through a cascade of conformational changes at the heterodimer interface, leading to stabilization of the isocitrate-binding at the active site and thus activation of the enzyme. ATP can activate the heterotetramer and the heterodimer composed of IDH3A and IDH3G subunits at low concentrations but inhibits their activities at high concentrations, whereas ATP exhibits only inhibitory effect on the heterodimer composed of IDH3A and IDH3B subunits. Regulatory subunit which plays a role in the allosteric regulation of the enzyme catalyzing the decarboxylation of isocitrate (ICT) into alpha-ketoglutarate. The heterodimer composed of the alpha (IDH3A) and beta (IDH3B) subunits and the heterodimer composed of the alpha (IDH3A) and gamma (IDH3G) subunits, have considerable basal activity but the full activity of the heterotetramer (containing two subunits of IDH3A, one of IDH3B and one of IDH3G) requires the assembly and cooperative function of both heterodimers. This chain is Isocitrate dehydrogenase [NAD] subunit gamma 1, mitochondrial (Idh3g), found in Rattus norvegicus (Rat).